The primary structure comprises 445 residues: Xylose isomerase (445 aa).

Active-site residues include His-107 and Asp-110. The Mg(2+) site is built by Glu-238, Glu-274, His-277, Asp-302, Asp-313, Asp-315, and Asp-345.

Belongs to the xylose isomerase family. In terms of assembly, homotetramer. It depends on Mg(2+) as a cofactor.

The protein resides in the cytoplasm. The catalysed reaction is alpha-D-xylose = alpha-D-xylulofuranose. The sequence is that of Xylose isomerase (xylA) from Bacillus subtilis (strain 168).